The chain runs to 152 residues: Deoxyuridine 5'-triphosphate nucleotidohydrolase (152 aa).

Residues 71-73, asparagine 84, 88-90, and methionine 98 each bind substrate; these read RSG and LID.

Belongs to the dUTPase family. It depends on Mg(2+) as a cofactor.

It carries out the reaction dUTP + H2O = dUMP + diphosphate + H(+). The protein operates within pyrimidine metabolism; dUMP biosynthesis; dUMP from dCTP (dUTP route): step 2/2. This enzyme is involved in nucleotide metabolism: it produces dUMP, the immediate precursor of thymidine nucleotides and it decreases the intracellular concentration of dUTP so that uracil cannot be incorporated into DNA. In Shewanella woodyi (strain ATCC 51908 / MS32), this protein is Deoxyuridine 5'-triphosphate nucleotidohydrolase.